The chain runs to 469 residues: UDP-N-acetylmuramate--L-alanine ligase (469 aa).

Position 114–120 (114–120 (GTHGKTT)) interacts with ATP.

It belongs to the MurCDEF family.

Its subcellular location is the cytoplasm. The catalysed reaction is UDP-N-acetyl-alpha-D-muramate + L-alanine + ATP = UDP-N-acetyl-alpha-D-muramoyl-L-alanine + ADP + phosphate + H(+). It functions in the pathway cell wall biogenesis; peptidoglycan biosynthesis. Cell wall formation. This Chlorobium phaeovibrioides (strain DSM 265 / 1930) (Prosthecochloris vibrioformis (strain DSM 265)) protein is UDP-N-acetylmuramate--L-alanine ligase.